The primary structure comprises 433 residues: Glutamate-1-semialdehyde 2,1-aminomutase (433 aa).

Lys-272 is modified (N6-(pyridoxal phosphate)lysine).

The protein belongs to the class-III pyridoxal-phosphate-dependent aminotransferase family. HemL subfamily. As to quaternary structure, homodimer. It depends on pyridoxal 5'-phosphate as a cofactor.

It is found in the cytoplasm. The catalysed reaction is (S)-4-amino-5-oxopentanoate = 5-aminolevulinate. It participates in porphyrin-containing compound metabolism; protoporphyrin-IX biosynthesis; 5-aminolevulinate from L-glutamyl-tRNA(Glu): step 2/2. The protein is Glutamate-1-semialdehyde 2,1-aminomutase of Methylacidiphilum infernorum (isolate V4) (Methylokorus infernorum (strain V4)).